The sequence spans 161 residues: Phosphopantetheine adenylyltransferase (161 aa).

A substrate-binding site is contributed by threonine 11. ATP is bound by residues 11 to 12 and histidine 19; that span reads TF. Substrate is bound by residues lysine 43, threonine 75, and arginine 89. ATP is bound by residues 90–92, glutamate 100, and 125–131; these read GLR and YSFLSSS.

The protein belongs to the bacterial CoaD family. In terms of assembly, homohexamer. Requires Mg(2+) as cofactor.

It is found in the cytoplasm. It carries out the reaction (R)-4'-phosphopantetheine + ATP + H(+) = 3'-dephospho-CoA + diphosphate. Its pathway is cofactor biosynthesis; coenzyme A biosynthesis; CoA from (R)-pantothenate: step 4/5. Its function is as follows. Reversibly transfers an adenylyl group from ATP to 4'-phosphopantetheine, yielding dephospho-CoA (dPCoA) and pyrophosphate. The polypeptide is Phosphopantetheine adenylyltransferase (Listeria welshimeri serovar 6b (strain ATCC 35897 / DSM 20650 / CCUG 15529 / CIP 8149 / NCTC 11857 / SLCC 5334 / V8)).